The following is a 341-amino-acid chain: GTP-binding protein REM 2 (341 aa).

The segment covering 1–13 (MHTDLDTDMDMDT) has biased composition (acidic residues). Disordered regions lie at residues 1-71 (MHTD…GSMP) and 84-106 (VDEL…GSGE). The span at 18–30 (LCSSSSRQASPLG) shows a compositional bias: polar residues. A Phosphoserine modification is found at S27. Over residues 90 to 106 (PPQASPSGSSDSLGSGE) the composition is skewed to low complexity. Residues 122-129 (GESGVGKS), 230-233 (NKSD), and 261-262 (AA) each bind GTP. Positions 282-309 (RGRGHAGGQRPEPSSPDGPAPPTRRESL) are disordered. Over residues 294-303 (PSSPDGPAPP) the composition is skewed to pro residues. Residue S296 is modified to Phosphoserine.

It belongs to the small GTPase superfamily. RGK family.

It is found in the cell membrane. In terms of biological role, binds GTP saturably and exhibits a low intrinsic rate of GTP hydrolysis. This chain is GTP-binding protein REM 2 (Rem2), found in Mus musculus (Mouse).